Consider the following 1218-residue polypeptide: NACHT, LRR and PYD domains-containing protein 1a allele 4 (1218 aa).

Residues Met-1 to Thr-29 show a composition bias toward polar residues. Disordered stretches follow at residues Met-1 to Gln-44 and Glu-71 to Glu-91. The segment covering Arg-77–Leu-87 has biased composition (basic residues). The NACHT domain maps to Gln-175 to Leu-484. ATP is bound at residue Gly-181–Ser-188. LRR repeat units lie at residues Lys-343 to Cys-364, Asn-673 to Cys-693, and Arg-730 to Cys-750. Polar residues predominate over residues Thr-799–Lys-815. The interval Thr-799–Val-842 is disordered. The interval Phe-835–Phe-968 is ZU5. Positions Phe-835–Ser-1118 constitute an FIIND domain. Positions Ser-969 to Ser-1118 are UPA. The CARD domain occupies Asp-1122–Ser-1211.

Belongs to the NLRP family. Interacts (via LRR repeats) with BCL2 and BCL2L1 (via the loop between motifs BH4 and BH3). Interacts with NOD2; this interaction is enhanced in the presence of muramyl dipeptide (MDP) and increases IL1B release. Interacts with EIF2AK2/PKR; this interaction requires EIF2AK2 activity, is accompanied by EIF2AK2 autophosphorylation and promotes inflammasome assembly in response to danger-associated signals. Interacts with MEFV; this interaction targets Nlrp1a to degradation by autophagy, hence preventing excessive IL1B- and IL18-mediated inflammation. Interacts with DPP9; leading to inhibit activation of the inflammasome. DPP9 acts via formation of a ternary complex, composed of a DPP9 homodimer, one full-length NLRP1 protein, and one cleaved C-terminus of Nlrp1a (NACHT, LRR and PYD domains-containing protein 1a, C-terminus). Interacts with DPP8; leading to inhibit activation of the inflammasome, probably via formation of a ternary complex with DPP8. As to quaternary structure, interacts with the C-terminal part of Nlrp1a (NACHT, LRR and PYD domains-containing protein 1a, C-terminus) in absence of pathogens and other damage-associated signals. In terms of assembly, interacts with the N-terminal part of Nlrp1a (NACHT, LRR and PYD domains-containing protein 1a, N-terminus) in absence of pathogens and other damage-associated signals. Homomultimer; forms the Nlrp1a inflammasome polymeric complex, a filament composed of homopolymers of this form in response to pathogens and other damage-associated signals. The Nlrp1a inflammasome polymeric complex directly recruits pro-caspase-1 (proCASP1) independently of PYCARD/ASC. Interacts (via CARD domain) with CASP1 (via CARD domain); leading to CASP1 activation. Autocatalytically cleaved. Autocatalytic cleavage in FIIND region occurs constitutively, prior to activation signals, and is required for inflammasome activity (IL1B release), possibly by facilitating CASP1 binding. Both N- and C-terminal parts remain associated non-covalently. In terms of processing, ubiquitinated in response to pathogen-associated signals, leading to its degradation by the proteasome and subsequent release of the cleaved C-terminal part of the protein (NACHT, LRR and PYD domains-containing protein 1a, C-terminus), which polymerizes and forms the Nlrp1a inflammasome.

The protein resides in the cytoplasm. It is found in the cytosol. The protein localises to the nucleus. It localises to the inflammasome. Activated by pathogens and other damage-associated signals: activation promotes ubiquitination and degradation of the N-terminal part, releasing the cleaved C-terminal part of the protein (NACHT, LRR and PYD domains-containing protein 1a, C-terminus), which polymerizes and forms the Nlrp1a inflammasome. Nlrp1a inflammasome is inhibited by DPP8 and DPP9, which sequester the C-terminal fragment of Nlrp1a (NACHT, LRR and PYD domains-containing protein 1a, C-terminus) in a ternary complex, thereby preventing Nlrp1a oligomerization and activation. Nlrp1a inflammasome is strongly activated by Val-boroPro (Talabostat, PT-100), an inhibitor of dipeptidyl peptidases DPP8 and DPP9. Val-boroPro relieves inhibition of DPP8 and/or DPP9 by promoting disruption of the ternary complex, releasing its C-terminal part from autoinhibition. Not activated by cleavage by B.anthracis lethal toxin (LT) endopeptidase. Acts as the sensor component of the Nlrp1a inflammasome, which mediates inflammasome activation in response to various pathogen-associated signals, leading to subsequent pyroptosis. Inflammasomes are supramolecular complexes that assemble in the cytosol in response to pathogens and other damage-associated signals and play critical roles in innate immunity and inflammation. Acts as a recognition receptor (PRR): recognizes specific pathogens and other damage-associated signals, such as Val-boroPro inhibitor, and mediates the formation of the inflammasome polymeric complex. In response to pathogen-associated signals, the N-terminal part of Nlrp1a is degraded by the proteasome, releasing the cleaved C-terminal part of the protein (NACHT, LRR and PYD domains-containing protein 1a, C-terminus), which polymerizes to initiate the formation of the inflammasome complex: the inflammasome directly recruits pro-caspase-1 (proCASP1) independently of PYCARD/ASC and promotes caspase-1 (CASP1) activation, which subsequently cleaves and activates inflammatory cytokines IL1B and IL18 and gasdermin-D (GSDMD), leading to pyroptosis. In the absence of GSDMD expression, the Nlrp1a inflammasome is able to recruit and activate CASP8, leading to activation of gasdermin-E (GSDME). Its function is as follows. Constitutes the precursor of the Nlrp1a inflammasome, which mediates autoproteolytic processing within the FIIND domain to generate the N-terminal and C-terminal parts, which are associated non-covalently in absence of pathogens and other damage-associated signals. Functionally, regulatory part that prevents formation of the Nlrp1a inflammasome: in absence of pathogens and other damage-associated signals, interacts with the C-terminal part of Nlrp1a (NACHT, LRR and PYD domains-containing protein 1a, C-terminus), preventing activation of the Nlrp1a inflammasome. In response to pathogen-associated signals, this part is ubiquitinated by the N-end rule pathway and degraded by the proteasome, releasing the cleaved C-terminal part of the protein, which polymerizes and forms the Nlrp1a inflammasome. In terms of biological role, constitutes the active part of the Nlrp1a inflammasome. In absence of pathogens and other damage-associated signals, interacts with the N-terminal part of Nlrp1a (NACHT, LRR and PYD domains-containing protein 1a, N-terminus), preventing activation of the Nlrp1a inflammasome. In response to pathogen-associated signals, the N-terminal part of Nlrp1a is degraded by the proteasome, releasing this form, which polymerizes to form the Nlrp1a inflammasome complex: the Nlrp1a inflammasome complex then directly recruits pro-caspase-1 (proCASP1) and promotes caspase-1 (CASP1) activation, leading to gasdermin-D (GSDMD) cleavage and subsequent pyroptosis. The polypeptide is NACHT, LRR and PYD domains-containing protein 1a allele 4 (Rattus norvegicus (Rat)).